The chain runs to 221 residues: Pectate lyase C (221 aa).

Positions 1–28 (MKRLAGTVILSGLLVCGFGQALPEKALA) are cleaved as a signal peptide.

The protein belongs to the polysaccharide lyase 3 family. It depends on Ca(2+) as a cofactor.

The protein localises to the secreted. The catalysed reaction is Eliminative cleavage of (1-&gt;4)-alpha-D-galacturonan to give oligosaccharides with 4-deoxy-alpha-D-galact-4-enuronosyl groups at their non-reducing ends.. It catalyses the reaction Eliminative cleavage of (1-&gt;4)-alpha-D-galacturonan methyl ester to give oligosaccharides with 4-deoxy-6-O-methyl-alpha-D-galact-4-enuronosyl groups at their non-reducing ends.. It functions in the pathway glycan metabolism; pectin degradation; 2-dehydro-3-deoxy-D-gluconate from pectin: step 2/5. In terms of biological role, catalyzes the depolymerization of both polygalacturonate and pectins of methyl esterification degree from 22 to 89%, with an endo mode of action. In contrast to the majority of pectate lyases, displays high activity on highly methylated pectins. The chain is Pectate lyase C (pelC) from Bacillus licheniformis (strain ATCC 14580 / DSM 13 / JCM 2505 / CCUG 7422 / NBRC 12200 / NCIMB 9375 / NCTC 10341 / NRRL NRS-1264 / Gibson 46).